Here is a 328-residue protein sequence, read N- to C-terminus: Pleckstrin homology domain protein OPY1 (328 aa).

The segment at 19–52 (NLIKKPSTSQNKTPTAQSSSGNNGAADGAPQGYH) is disordered. Polar residues predominate over residues 24–41 (PSTSQNKTPTAQSSSGNN). Residues 213-328 (AEHQVCSGIL…IRKKLKAENI (116 aa)) are required for targeting to the cell membrane. The PH domain occupies 215-318 (HQVCSGILYT…WIINFKSGIL (104 aa)).

Interacts with MSS4 (via N-terminus); to negatively regulate MSS4 kinase activity.

The protein resides in the cell membrane. It is found in the cytoplasm. Its function is as follows. Binds phosphatidylinositol 4,5-bisphosphate (PtdIns(4,5)P2/PIP2) at the cell membrane. Negatively regulates the activity of phosphatidylinositol 4-phosphate 5-kinase MSS4. The chain is Pleckstrin homology domain protein OPY1 (OPY1) from Saccharomyces cerevisiae (strain ATCC 204508 / S288c) (Baker's yeast).